Reading from the N-terminus, the 422-residue chain is uncharacterized protein (422 aa).

The next 12 membrane-spanning stretches (helical) occupy residues 23 to 43, 47 to 67, 90 to 110, 112 to 132, 151 to 171, 172 to 192, 228 to 248, 263 to 283, 291 to 308, 318 to 340, 352 to 372, and 381 to 401; these read IVKISGDMFAFNSILWFLIYD, AIGTALLIAVTFLPEAVLAPV, AIVLIIPLCHFAGFSPLWFVM, LMIVHSATGAAYNPASIALIP, AQIVRLGAVTLCGAFLTFISP, SYTMLIALVLYLVSGFLVLFI, ILYPLAIYCIFMNFAAAPWEA, IVYSLLKATTAAGAFLLGFVL, YGLLFVTAGIIEGFAFFI, VFFAAFTFGAAVSAVNVPEYTII, VYAVIHMISNISIPAGAVICG, and GKVIAVGGIVEIIAGIGILLF.

It belongs to the major facilitator superfamily.

It localises to the cell membrane. This is an uncharacterized protein from Bacillus subtilis (strain 168).